The chain runs to 362 residues: MAKVYNFSAGPAVLPHQVLAEAQSELLDWHGSGMSVMEMSHRGKEFMEIIHDAEQDLRQLMGIPAGYKVLFLQGGASLQFAMAPLNLLGDKDSIDIVNTGHWSKLAIKEAKRYAKVNVVASSEDRNFCYVPEEAAWQRDPNAAYLHYTSNETIGGLQFPYIPAEQHGVPLVCDMSSDFLSREVDVSRFGMIYAGAQKNIGPSGLTVLLIREDLLGKARADIPTMLNYQVHADADSMYNTPGTYPIYIAGLVFKWLKEQGGVKGIATRNEEKAGLLYHVIDSSGGFYSTHIEQPFRSKMNVVFKLRDEALDEIFLLEARKNGLAQLKGHRAVGGMRASIYNAMPIEGVKSLVNFMQDFARQYG.

An L-glutamate-binding site is contributed by arginine 42. Residues 76–77, tryptophan 102, threonine 152, aspartate 173, and glutamine 196 contribute to the pyridoxal 5'-phosphate site; that span reads AS. The residue at position 197 (lysine 197) is an N6-(pyridoxal phosphate)lysine. Pyridoxal 5'-phosphate is bound at residue 238–239; it reads NT.

Belongs to the class-V pyridoxal-phosphate-dependent aminotransferase family. SerC subfamily. Homodimer. Pyridoxal 5'-phosphate serves as cofactor.

It localises to the cytoplasm. It catalyses the reaction O-phospho-L-serine + 2-oxoglutarate = 3-phosphooxypyruvate + L-glutamate. The enzyme catalyses 4-(phosphooxy)-L-threonine + 2-oxoglutarate = (R)-3-hydroxy-2-oxo-4-phosphooxybutanoate + L-glutamate. It functions in the pathway amino-acid biosynthesis; L-serine biosynthesis; L-serine from 3-phospho-D-glycerate: step 2/3. It participates in cofactor biosynthesis; pyridoxine 5'-phosphate biosynthesis; pyridoxine 5'-phosphate from D-erythrose 4-phosphate: step 3/5. Functionally, catalyzes the reversible conversion of 3-phosphohydroxypyruvate to phosphoserine and of 3-hydroxy-2-oxo-4-phosphonooxybutanoate to phosphohydroxythreonine. In Chromobacterium violaceum (strain ATCC 12472 / DSM 30191 / JCM 1249 / CCUG 213 / NBRC 12614 / NCIMB 9131 / NCTC 9757 / MK), this protein is Phosphoserine aminotransferase.